Consider the following 273-residue polypeptide: Shikimate dehydrogenase (NADP(+)) (273 aa).

Shikimate contacts are provided by residues 15-17 (SLS) and Thr-62. Lys-66 acts as the Proton acceptor in catalysis. Glu-78 is an NADP(+) binding site. Positions 87 and 102 each coordinate shikimate. NADP(+)-binding positions include 126–130 (GAGGA), 149–154 (NRTPER), Ile-215, and Gly-238.

Belongs to the shikimate dehydrogenase family. In terms of assembly, homodimer.

It catalyses the reaction shikimate + NADP(+) = 3-dehydroshikimate + NADPH + H(+). It functions in the pathway metabolic intermediate biosynthesis; chorismate biosynthesis; chorismate from D-erythrose 4-phosphate and phosphoenolpyruvate: step 4/7. Functionally, involved in the biosynthesis of the chorismate, which leads to the biosynthesis of aromatic amino acids. Catalyzes the reversible NADPH linked reduction of 3-dehydroshikimate (DHSA) to yield shikimate (SA). The sequence is that of Shikimate dehydrogenase (NADP(+)) from Desulfitobacterium hafniense (strain Y51).